A 217-amino-acid chain; its full sequence is Protein-L-isoaspartate O-methyltransferase (217 aa).

Serine 64 is a catalytic residue.

The protein belongs to the methyltransferase superfamily. L-isoaspartyl/D-aspartyl protein methyltransferase family.

The protein localises to the cytoplasm. It catalyses the reaction [protein]-L-isoaspartate + S-adenosyl-L-methionine = [protein]-L-isoaspartate alpha-methyl ester + S-adenosyl-L-homocysteine. In terms of biological role, catalyzes the methyl esterification of L-isoaspartyl residues in peptides and proteins that result from spontaneous decomposition of normal L-aspartyl and L-asparaginyl residues. It plays a role in the repair and/or degradation of damaged proteins. In Nitrobacter winogradskyi (strain ATCC 25391 / DSM 10237 / CIP 104748 / NCIMB 11846 / Nb-255), this protein is Protein-L-isoaspartate O-methyltransferase.